The chain runs to 51 residues: ATP synthase protein 8 (51 aa).

A helical membrane pass occupies residues 7 to 27 (LNWAMMTIMFSLSLLVSMIIL).

This sequence belongs to the ATPase protein 8 family. F-type ATPases have 2 components, CF(1) - the catalytic core - and CF(0) - the membrane proton channel.

It is found in the mitochondrion membrane. In terms of biological role, mitochondrial membrane ATP synthase (F(1)F(0) ATP synthase or Complex V) produces ATP from ADP in the presence of a proton gradient across the membrane which is generated by electron transport complexes of the respiratory chain. F-type ATPases consist of two structural domains, F(1) - containing the extramembraneous catalytic core and F(0) - containing the membrane proton channel, linked together by a central stalk and a peripheral stalk. During catalysis, ATP synthesis in the catalytic domain of F(1) is coupled via a rotary mechanism of the central stalk subunits to proton translocation. Part of the complex F(0) domain. Minor subunit located with subunit a in the membrane. The sequence is that of ATP synthase protein 8 (MT-ATP8) from Limulus polyphemus (Atlantic horseshoe crab).